The following is a 155-amino-acid chain: Trypsin/factor XIIA inhibitor (155 aa).

The N-terminal stretch at 1–28 (MASSSSSSHRRLILAAAVLLSVLAAASA) is a signal peptide. 5 disulfide bridges follow: cysteine 34–cysteine 83, cysteine 48–cysteine 72, cysteine 57–cysteine 114, cysteine 73–cysteine 132, and cysteine 85–cysteine 143. The active site involves arginine 62. A propeptide spans 139 to 155 (GVAECPWILGGGTMPSK) (C-terminal peptide).

The protein belongs to the protease inhibitor I6 (cereal trypsin/alpha-amylase inhibitor) family. As to quaternary structure, monomer.

The protein resides in the secreted. Functionally, potent inhibitor of mammalian trypsin and a specific inhibitor of factor XIIa (activated hageman factor). The protein is Trypsin/factor XIIA inhibitor of Zea mays (Maize).